Reading from the N-terminus, the 519-residue chain is Maturase K (519 aa).

This sequence belongs to the intron maturase 2 family. MatK subfamily.

It localises to the plastid. It is found in the chloroplast. In terms of biological role, usually encoded in the trnK tRNA gene intron. Probably assists in splicing its own and other chloroplast group II introns. This chain is Maturase K, found in Cycas panzhihuaensis (Dukou cycad).